Reading from the N-terminus, the 227-residue chain is MRQRFVLDTTAITDAGLRIKEGYESLCESAAEVLDLIALARLKLDISCYIPYPSVYTELTSFLKRYGCDEEIFTKLDTWLVKKTPNRYEVKIPAAIFYEYIITVRQKMNRGRRLAEEYILESSAITAKLEDKSKIEEEIGALISKFRDKYRAVMRQGILDSAPDLDVLLLAKELEAGVVSSDAGIRKWSERLGLRFVEAAKFPRMLKEYLKLMGSKDIVGWFESEED.

It belongs to the HARP family.

It carries out the reaction Endonucleolytic cleavage of RNA, removing 5'-extranucleotides from tRNA precursor.. In terms of biological role, RNA-free RNase P that catalyzes the removal of the 5'-leader sequence from pre-tRNA to produce the mature 5'-terminus. This is RNA-free ribonuclease P from Archaeoglobus fulgidus (strain ATCC 49558 / DSM 4304 / JCM 9628 / NBRC 100126 / VC-16).